We begin with the raw amino-acid sequence, 535 residues long: GMP synthase [glutamine-hydrolyzing] (535 aa).

Residues 21–211 (LIVILDFGSQ…VYHICDCEPT (191 aa)) form the Glutamine amidotransferase type-1 domain. Catalysis depends on C98, which acts as the Nucleophile. Residues H185 and E187 contribute to the active site. Residues 212 to 410 (WTTAAFVEEA…LGLPEEIVQR (199 aa)) form the GMPS ATP-PPase domain. 239–245 (SGGVDSS) is a binding site for ATP.

In terms of assembly, homodimer.

It catalyses the reaction XMP + L-glutamine + ATP + H2O = GMP + L-glutamate + AMP + diphosphate + 2 H(+). The protein operates within purine metabolism; GMP biosynthesis; GMP from XMP (L-Gln route): step 1/1. Functionally, catalyzes the synthesis of GMP from XMP. In Thermosynechococcus vestitus (strain NIES-2133 / IAM M-273 / BP-1), this protein is GMP synthase [glutamine-hydrolyzing].